A 313-amino-acid polypeptide reads, in one-letter code: Ras-related GTP-binding protein A (313 aa).

Positions 16, 17, 19, 20, 21, 22, 36, 42, 65, and 127 each coordinate GTP. GDP is bound by residues Gly17, Gly19, Lys20, Thr21, and Ser22. The GDP site is built by His127 and Asp130. A Glycyl lysine isopeptide (Lys-Gly) (interchain with G-Cter in ubiquitin) cross-link involves residue Lys142. GDP is bound by residues Leu148 and Ile164. A GTP-binding site is contributed by Ile164. Glycyl lysine isopeptide (Lys-Gly) (interchain with G-Cter in ubiquitin) cross-links involve residues Lys220, Lys230, and Lys244. A Phosphoserine modification is found at Ser309.

The protein belongs to the GTR/RAG GTP-binding protein family. Can occur as a homodimer or as a heterodimer with RRAGC or RRAGD in a sequence-independent manner; heterodimerization stabilizes proteins of the heterodimer. The GTP-bound form of RRAGA (in complex with the GDP-bound form of RRAGC or RRAGD) interacts with RPTOR, thereby promoting recruitment of mTORC1 to the lysosomes. The Rag heterodimer interacts with SLC38A9; the probable amino acid sensor. The Rag heterodimer interacts with the Ragulator complex. The GTP-bound form of RRAGA interacts with NOL8. Component of the lysosomal folliculin complex (LFC), composed of FLCN, FNIP1 (or FNIP2), RagA/RRAGA or RagB/RRAGB GDP-bound, RagC/RRAGC or RagD/RRAGD GTP-bound, and Ragulator. Interacts with SH3BP4; the interaction with this negative regulator is most probably direct, preferentially occurs with the inactive GDP-bound form of RRAGA and is negatively regulated by amino acids. Interacts (polyubiquitinated) with TSC2. Interacts with SESN1, SESN2 and SESN3. Interacts with PIP4P1. Interacts with GPR137B. Interacts with WDR83; this interaction regulates the spatiotemporal localization of mTORC1 to the lysosomal surface. In terms of processing, polybiquitinated via 'Lys-63'-linked polyubiquitination by RNF152 in response to amino acid starvation: polyubiquitination of the GDP-bound inactive form by RNF152 promotes RRAGA inactivation and interaction with the GATOR1 complex. This does not affect RRAGA degradation.

The protein resides in the cytoplasm. Its subcellular location is the nucleus. It localises to the lysosome membrane. It catalyses the reaction GTP + H2O = GDP + phosphate + H(+). The activation of GTP-binding proteins is generally mediated by a guanine exchange factor (GEF), while inactivation through hydrolysis of bound GTP is catalyzed by a GTPase activating protein (GAP). The Ragulator complex functions as a GEF and promotes the active GTP-bound form. The GATOR1 complex functions as a GAP and stimulates RRAGA GTPase activity to turn it into its inactive GDP-bound form, preventing mTORC1 recruitment and activation. Its function is as follows. Guanine nucleotide-binding protein that plays a crucial role in the cellular response to amino acid availability through regulation of the mTORC1 signaling cascade. Forms heterodimeric Rag complexes with RagC/RRAGC or RagD/RRAGD and cycles between an inactive GDP-bound and an active GTP-bound form: RagA/RRAGA is in its active form when GTP-bound RagA/RRAGA forms a complex with GDP-bound RagC/RRAGC (or RagD/RRAGD) and in an inactive form when GDP-bound RagA/RRAGA heterodimerizes with GTP-bound RagC/RRAGC (or RagD/RRAGD). In its GTP-bound active form, promotes the recruitment of mTORC1 to the lysosomes and its subsequent activation by the GTPase RHEB. Involved in the RCC1/Ran-GTPase pathway. May play a direct role in a TNF-alpha signaling pathway leading to induction of cell death. The protein is Ras-related GTP-binding protein A of Bos taurus (Bovine).